The sequence spans 382 residues: Dual-specificity RNA methyltransferase RlmN (382 aa).

The Proton acceptor role is filled by Glu-95. The region spanning 101–348 (EDDRGTLCIS…TTVRKTRGDD (248 aa)) is the Radical SAM core domain. Cys-108 and Cys-353 are oxidised to a cystine. [4Fe-4S] cluster is bound by residues Cys-115, Cys-119, and Cys-122. S-adenosyl-L-methionine contacts are provided by residues 179 to 180 (GE), Ser-211, 233 to 235 (SLH), and Asn-310. The active-site S-methylcysteine intermediate is the Cys-353.

The protein belongs to the radical SAM superfamily. RlmN family. [4Fe-4S] cluster serves as cofactor.

Its subcellular location is the cytoplasm. The enzyme catalyses adenosine(2503) in 23S rRNA + 2 reduced [2Fe-2S]-[ferredoxin] + 2 S-adenosyl-L-methionine = 2-methyladenosine(2503) in 23S rRNA + 5'-deoxyadenosine + L-methionine + 2 oxidized [2Fe-2S]-[ferredoxin] + S-adenosyl-L-homocysteine. It catalyses the reaction adenosine(37) in tRNA + 2 reduced [2Fe-2S]-[ferredoxin] + 2 S-adenosyl-L-methionine = 2-methyladenosine(37) in tRNA + 5'-deoxyadenosine + L-methionine + 2 oxidized [2Fe-2S]-[ferredoxin] + S-adenosyl-L-homocysteine. In terms of biological role, specifically methylates position 2 of adenine 2503 in 23S rRNA and position 2 of adenine 37 in tRNAs. m2A2503 modification seems to play a crucial role in the proofreading step occurring at the peptidyl transferase center and thus would serve to optimize ribosomal fidelity. The sequence is that of Dual-specificity RNA methyltransferase RlmN from Bordetella pertussis (strain Tohama I / ATCC BAA-589 / NCTC 13251).